Reading from the N-terminus, the 77-residue chain is Large ribosomal subunit protein eL20 (77 aa).

Belongs to the eukaryotic ribosomal protein eL20 family. As to quaternary structure, part of the 50S ribosomal subunit. Binds 23S rRNA.

In Pyrococcus furiosus (strain ATCC 43587 / DSM 3638 / JCM 8422 / Vc1), this protein is Large ribosomal subunit protein eL20.